A 210-amino-acid chain; its full sequence is Glutathione S-transferase P (210 aa).

Positions 2–81 constitute a GST N-terminal domain; sequence PPYTIVYFPV…HLGRSLGLYG (80 aa). At tyrosine 4 the chain carries Phosphotyrosine; by EGFR. Glutathione-binding positions include tyrosine 8, arginine 14, tryptophan 39, lysine 45, and 52-53; that span reads QL. The residue at position 62 (threonine 62) is a Phosphothreonine. 65–66 lines the glutathione pocket; that stretch reads QS. The GST C-terminal domain maps to 83-204; the sequence is DQREAALVDM…SSPDHVNRPI (122 aa). N6-succinyllysine occurs at positions 103 and 116. Residue lysine 128 is modified to N6-acetyllysine.

The protein belongs to the GST superfamily. Pi family. Homodimer. Interacts with CDK5.

Its subcellular location is the cytoplasm. It is found in the mitochondrion. It localises to the nucleus. The catalysed reaction is RX + glutathione = an S-substituted glutathione + a halide anion + H(+). The enzyme catalyses prostaglandin J2 + glutathione = prostaglandin J2-S-(R)-glutathione. It catalyses the reaction prostaglandin J2 + glutathione = prostaglandin J2-S-(S)-glutathione. It carries out the reaction prostaglandin A2 + glutathione = prostaglandin A2-S-(S)-glutathione. The catalysed reaction is 11(S)-hydroxy-14(S),15(S)-epoxy-(5Z,8Z,12E)-eicosatrienoate + glutathione = (11S,15S)-dihydroxy-14(R)-S-glutathionyl-(5Z,8Z,12E)-eicosatrienoate. In terms of biological role, conjugation of reduced glutathione to a wide number of exogenous and endogenous hydrophobic electrophiles. Involved in the formation of glutathione conjugates of both prostaglandin A2 (PGA2) and prostaglandin J2 (PGJ2). Participates in the formation of novel hepoxilin regioisomers. Negatively regulates CDK5 activity via p25/p35 translocation to prevent neurodegeneration. This Cricetulus longicaudatus (Long-tailed dwarf hamster) protein is Glutathione S-transferase P (GSTP1).